The chain runs to 273 residues: 4-hydroxy-tetrahydrodipicolinate reductase (273 aa).

NAD(+) is bound by residues 12 to 17 and Glu38; that span reads GAGGRM. Arg39 is an NADP(+) binding site. Residues 102–104 and 126–129 contribute to the NAD(+) site; these read GTT and AANF. Catalysis depends on His159, which acts as the Proton donor/acceptor. His160 serves as a coordination point for (S)-2,3,4,5-tetrahydrodipicolinate. The active-site Proton donor is the Lys163. 169-170 contributes to the (S)-2,3,4,5-tetrahydrodipicolinate binding site; it reads GT.

Belongs to the DapB family. As to quaternary structure, homotetramer.

The protein resides in the cytoplasm. It carries out the reaction (S)-2,3,4,5-tetrahydrodipicolinate + NAD(+) + H2O = (2S,4S)-4-hydroxy-2,3,4,5-tetrahydrodipicolinate + NADH + H(+). The enzyme catalyses (S)-2,3,4,5-tetrahydrodipicolinate + NADP(+) + H2O = (2S,4S)-4-hydroxy-2,3,4,5-tetrahydrodipicolinate + NADPH + H(+). Its pathway is amino-acid biosynthesis; L-lysine biosynthesis via DAP pathway; (S)-tetrahydrodipicolinate from L-aspartate: step 4/4. Its function is as follows. Catalyzes the conversion of 4-hydroxy-tetrahydrodipicolinate (HTPA) to tetrahydrodipicolinate. The polypeptide is 4-hydroxy-tetrahydrodipicolinate reductase (Salmonella agona (strain SL483)).